The sequence spans 396 residues: Microcin B17-processing protein McbD (396 aa).

The YcaO domain occupies 41 to 396 (ASAAGETLKS…VRESKMVPFP (356 aa)).

Its subcellular location is the cytoplasm. In terms of biological role, necessary to process the inactive microcin B17 (McbA) precursor into the active peptide. This chain is Microcin B17-processing protein McbD (mcbD), found in Escherichia coli.